A 257-amino-acid polypeptide reads, in one-letter code: Ribonuclease HII (257 aa).

Residues 72 to 257 enclose the RNase H type-2 domain; sequence TYIAGIDEVG…FAPIKDMIQK (186 aa). Residues aspartate 78, glutamate 79, and aspartate 170 each coordinate a divalent metal cation.

This sequence belongs to the RNase HII family. The cofactor is Mn(2+). Requires Mg(2+) as cofactor.

It localises to the cytoplasm. It catalyses the reaction Endonucleolytic cleavage to 5'-phosphomonoester.. In terms of biological role, endonuclease that specifically degrades the RNA of RNA-DNA hybrids. This Bacillus cereus (strain G9842) protein is Ribonuclease HII.